A 60-amino-acid chain; its full sequence is DNA-directed RNA polymerase subunit Rpo6 (60 aa).

It belongs to the archaeal Rpo6/eukaryotic RPB6 RNA polymerase subunit family. As to quaternary structure, part of the RNA polymerase complex.

It localises to the cytoplasm. It carries out the reaction RNA(n) + a ribonucleoside 5'-triphosphate = RNA(n+1) + diphosphate. Its function is as follows. DNA-dependent RNA polymerase (RNAP) catalyzes the transcription of DNA into RNA using the four ribonucleoside triphosphates as substrates. This chain is DNA-directed RNA polymerase subunit Rpo6, found in Methanosarcina acetivorans (strain ATCC 35395 / DSM 2834 / JCM 12185 / C2A).